Consider the following 169-residue polypeptide: Large ribosomal subunit protein uL15 (169 aa).

Residues 1-13 (MKLNEIRDNEGAT) show a composition bias toward basic and acidic residues. The interval 1 to 40 (MKLNEIRDNEGATKNRMRVGRGIGSGKGKTGGRGVKGQKA) is disordered. A compositionally biased stretch (gly residues) spans 21–35 (RGIGSGKGKTGGRGV).

The protein belongs to the universal ribosomal protein uL15 family. As to quaternary structure, part of the 50S ribosomal subunit.

In terms of biological role, binds to the 23S rRNA. The sequence is that of Large ribosomal subunit protein uL15 from Methylorubrum populi (strain ATCC BAA-705 / NCIMB 13946 / BJ001) (Methylobacterium populi).